Here is a 580-residue protein sequence, read N- to C-terminus: Adenine deaminase 2 (580 aa).

It belongs to the metallo-dependent hydrolases superfamily. Adenine deaminase family. Mn(2+) is required as a cofactor.

It carries out the reaction adenine + H2O + H(+) = hypoxanthine + NH4(+). The chain is Adenine deaminase 2 from Latilactobacillus sakei subsp. sakei (strain 23K) (Lactobacillus sakei subsp. sakei).